The chain runs to 60 residues: Large ribosomal subunit protein bL32 (60 aa).

This sequence belongs to the bacterial ribosomal protein bL32 family.

The polypeptide is Large ribosomal subunit protein bL32 (Ehrlichia ruminantium (strain Gardel)).